The sequence spans 479 residues: Ribosomal RNA small subunit methyltransferase F (479 aa).

S-adenosyl-L-methionine is bound by residues 125 to 131, Glu-149, Asp-176, and Asp-194; that span reads AAAPGSK. The active-site Nucleophile is Cys-247.

The protein belongs to the class I-like SAM-binding methyltransferase superfamily. RsmB/NOP family.

The protein resides in the cytoplasm. The enzyme catalyses cytidine(1407) in 16S rRNA + S-adenosyl-L-methionine = 5-methylcytidine(1407) in 16S rRNA + S-adenosyl-L-homocysteine + H(+). Specifically methylates the cytosine at position 1407 (m5C1407) of 16S rRNA. In Escherichia coli O17:K52:H18 (strain UMN026 / ExPEC), this protein is Ribosomal RNA small subunit methyltransferase F.